Reading from the N-terminus, the 536-residue chain is Dual specificity calcium/calmodulin-dependent 3',5'-cyclic nucleotide phosphodiesterase 1B (536 aa).

The disordered stretch occupies residues 1 to 20 (MELSPRSPPEMLEESDCPSP). Residues Ser-7 and Ser-15 each carry the phosphoserine modification. Calmodulin-binding regions lie at residues 27 to 47 (PSKKMWIKLRSLLRYMVKQLE) and 118 to 141 (EKPKFRSIVHAVQAGIFVERMFRR). In terms of domain architecture, PDEase spans 146–503 (VGPTYSTAVL…QKWKERAASG (358 aa)). Catalysis depends on His-223, which acts as the Proton donor. Residues His-227, His-263, Asp-264, and Asp-370 each coordinate Zn(2+). Asp-264 provides a ligand contact to Mg(2+). 2 disordered regions span residues 447–474 (LADEDSKSKNQPSFQWRQPSLDVEVGDP) and 494–536 (QKWK…GNLD). Residues 455 to 464 (KNQPSFQWRQ) are compositionally biased toward polar residues. Phosphoserine is present on residues Ser-466 and Ser-514.

The protein belongs to the cyclic nucleotide phosphodiesterase family. PDE1 subfamily. Homodimer. Zn(2+) is required as a cofactor. Requires Mg(2+) as cofactor.

Its subcellular location is the cytoplasm. It is found in the cytosol. It carries out the reaction a nucleoside 3',5'-cyclic phosphate + H2O = a nucleoside 5'-phosphate + H(+). It catalyses the reaction 3',5'-cyclic GMP + H2O = GMP + H(+). The catalysed reaction is 3',5'-cyclic AMP + H2O = AMP + H(+). Its activity is regulated as follows. Type I PDE are activated by the binding of calmodulin in the presence of Ca(2+). In terms of biological role, cyclic nucleotide phosphodiesterase with a dual specificity for the second messengers cAMP and cGMP, which are key regulators of many important physiological processes. Has a preference for cGMP as a substrate. The chain is Dual specificity calcium/calmodulin-dependent 3',5'-cyclic nucleotide phosphodiesterase 1B from Homo sapiens (Human).